We begin with the raw amino-acid sequence, 142 residues long: Ribosome maturation factor RimP (142 aa).

It belongs to the RimP family.

It localises to the cytoplasm. Required for maturation of 30S ribosomal subunits. The sequence is that of Ribosome maturation factor RimP from Aromatoleum aromaticum (strain DSM 19018 / LMG 30748 / EbN1) (Azoarcus sp. (strain EbN1)).